A 979-amino-acid chain; its full sequence is Pimaradiene synthase pbcA (979 aa).

The VYDTAW motif signature appears at 34 to 39 (VYDTAW). The short motif at 328-331 (DADD) is the DXDD B-type cyclization motif element. Residues aspartate 665, glutamate 669, asparagine 865, aspartate 866, serine 869, and aspartate 873 each contribute to the Mg(2+) site. The short motif at 665–669 (DEFME) is the DEXXE A-type cyclization motif element.

The protein belongs to the terpene synthase family. Mg(2+) serves as cofactor.

The catalysed reaction is (2E,6E,10E)-geranylgeranyl diphosphate = ent-copalyl diphosphate. It catalyses the reaction ent-copalyl diphosphate = ent-pimara-8(14),15-diene + diphosphate. The protein operates within secondary metabolite biosynthesis; terpenoid biosynthesis. Functionally, bifunctional terpene synthase; part of the gene cluster that mediates the biosynthesis of the diterpene ent-pimara-8(14),15-diene (PD). Within the cluster, the HMG-CoA reductase AN1593 functions in the mevalonate pathway, which produces isoprenoid precursors. The geranylgeranyl pyrophosphate (GGPP) synthase AN1592 is needed in the formation of GGPP, the precursor for diterpenes. Lastly, the pimaradiene synthase pbcA performs the 2 cyclization steps that convert GGPP to ent-pimara-8(14),15-diene with ent-copalyl diphosphate as an intermediate. The putative roles of the remaining cluster enzymes in ent-pimara-8(14),15-diene biosynthesis is unclear. The cytochrome P450 monooxygenase AN1598, the glutathione S-transferase AN1595, the oxidoreductases AN1596 and AN1597 probably function as decorative enzymes. It is possible that in biological conditions the compound is oxidized to ent-pimara-8(14),15-dien-19-oic acid, which is a bioactive diterpene compound predominant in many plant extracts. The polypeptide is Pimaradiene synthase pbcA (Emericella nidulans (strain FGSC A4 / ATCC 38163 / CBS 112.46 / NRRL 194 / M139) (Aspergillus nidulans)).